The chain runs to 129 residues: Serum amyloid A-2 protein (129 aa).

An N-terminal signal peptide occupies residues M1–S18. Pyrrolidone carboxylic acid is present on Q19. A compositionally biased stretch (basic and acidic residues) spans K90–A103. Positions K90–Y129 are disordered.

It belongs to the SAA family. Apolipoprotein of the HDL complex.

The protein resides in the secreted. Functionally, major acute phase reactant. The protein is Serum amyloid A-2 protein of Sus scrofa (Pig).